Here is a 238-residue protein sequence, read N- to C-terminus: Tritrans,polycis-undecaprenyl-diphosphate synthase (geranylgeranyl-diphosphate specific) (238 aa).

Residue Asp18 is part of the active site. A Mg(2+)-binding site is contributed by Asp18. Residues 19–22 (GNRR) and 64–66 (STE) contribute to the substrate site. Asn67 functions as the Proton acceptor in the catalytic mechanism. Residues Arg70, Arg187, and 193–195 (RLS) contribute to the substrate site. Glu206 is a binding site for Mg(2+).

Belongs to the UPP synthase family. Homodimer. The cofactor is Mg(2+).

The catalysed reaction is geranylgeranyl diphosphate + 7 isopentenyl diphosphate = tri-trans,hepta-cis-undecaprenyl diphosphate + 7 diphosphate. In terms of biological role, catalyzes the sequential condensation of isopentenyl diphosphate (IPP) with geranylgeranyl diphosphate (GGPP) to yield (2Z,6Z,10Z,14Z,18Z,22Z,26Z,30E,34E,38E)-undecaprenyl diphosphate (tritrans,heptacis-UPP). It is probably the precursor of glycosyl carrier lipids. The sequence is that of Tritrans,polycis-undecaprenyl-diphosphate synthase (geranylgeranyl-diphosphate specific) from Pyrobaculum aerophilum (strain ATCC 51768 / DSM 7523 / JCM 9630 / CIP 104966 / NBRC 100827 / IM2).